The primary structure comprises 598 residues: NADH-quinone oxidoreductase subunit C/D (598 aa).

The tract at residues 1–189 is NADH dehydrogenase I subunit C; the sequence is MTDSTTHDRE…DPFELTRQKQ (189 aa). Residues 213–598 form an NADH dehydrogenase I subunit D region; the sequence is DFMFLNLGPN…IDFVMSDVDR (386 aa).

The protein in the N-terminal section; belongs to the complex I 30 kDa subunit family. In the C-terminal section; belongs to the complex I 49 kDa subunit family. In terms of assembly, NDH-1 is composed of 13 different subunits. Subunits NuoB, CD, E, F, and G constitute the peripheral sector of the complex.

The protein localises to the cell inner membrane. It catalyses the reaction a quinone + NADH + 5 H(+)(in) = a quinol + NAD(+) + 4 H(+)(out). NDH-1 shuttles electrons from NADH, via FMN and iron-sulfur (Fe-S) centers, to quinones in the respiratory chain. The immediate electron acceptor for the enzyme in this species is believed to be ubiquinone. Couples the redox reaction to proton translocation (for every two electrons transferred, four hydrogen ions are translocated across the cytoplasmic membrane), and thus conserves the redox energy in a proton gradient. This is NADH-quinone oxidoreductase subunit C/D from Edwardsiella ictaluri (strain 93-146).